Reading from the N-terminus, the 620-residue chain is Probable translation initiation factor IF-2 (620 aa).

The span at methionine 1 to threonine 10 shows a compositional bias: acidic residues. The tract at residues methionine 1 to aspartate 29 is disordered. The segment covering aspartate 11–aspartate 29 has biased composition (low complexity). Positions leucine 33–methionine 248 constitute a tr-type G domain. The interval glycine 42 to threonine 49 is G1. Glycine 42–threonine 49 contributes to the GTP binding site. The tract at residues alanine 67–histidine 71 is G2. Residues aspartate 104–glycine 107 form a G3 region. GTP is bound by residues aspartate 104–histidine 108 and asparagine 158–aspartate 161. The segment at asparagine 158 to aspartate 161 is G4. Over residues threonine 162–serine 183 the composition is skewed to polar residues. A disordered region spans residues threonine 162–alanine 185. Residues serine 226–isoleucine 228 form a G5 region.

This sequence belongs to the TRAFAC class translation factor GTPase superfamily. Classic translation factor GTPase family. IF-2 subfamily.

In terms of biological role, function in general translation initiation by promoting the binding of the formylmethionine-tRNA to ribosomes. Seems to function along with eIF-2. The polypeptide is Probable translation initiation factor IF-2 (Haloquadratum walsbyi (strain DSM 16790 / HBSQ001)).